A 469-amino-acid polypeptide reads, in one-letter code: 3-isopropylmalate dehydratase large subunit (469 aa).

3 residues coordinate [4Fe-4S] cluster: Cys347, Cys410, and Cys413.

This sequence belongs to the aconitase/IPM isomerase family. LeuC type 1 subfamily. In terms of assembly, heterodimer of LeuC and LeuD. Requires [4Fe-4S] cluster as cofactor.

It catalyses the reaction (2R,3S)-3-isopropylmalate = (2S)-2-isopropylmalate. It functions in the pathway amino-acid biosynthesis; L-leucine biosynthesis; L-leucine from 3-methyl-2-oxobutanoate: step 2/4. Its function is as follows. Catalyzes the isomerization between 2-isopropylmalate and 3-isopropylmalate, via the formation of 2-isopropylmaleate. This Ralstonia nicotianae (strain ATCC BAA-1114 / GMI1000) (Ralstonia solanacearum) protein is 3-isopropylmalate dehydratase large subunit.